Here is a 382-residue protein sequence, read N- to C-terminus: MQDAAPRLTFTLRDEERLMMKIGVFVPIGNNGWLISTHAPQYMPTFELNKAIVQKAEHYHFDFALSMIKLRGFGGKTEFWDHNLESFTLMAGLAAVTSRIQIYATAATLTLPPAIVARMAATIDSISGGRFGVNLVTGWQKPEYEQMGIWPGDDYFSRRYDYLTEYVQVLRDLWGTGKSDFKGDFFTMNDCRVSPQPSVPMKVICAGQSDAGMAFSARYADFNFCFGKGVNTPTAFAPTAARMKQAAEQTGRDVGSYVLFMVIADETDDAARAKWEHYKAGADEEALSWLTEQSQKDTRSGTDTNVRQMADPTSAVNINMGTLVGSYASVARMLDEVASVPGAEGVLLTFDDFLSGIETFGERIQPLMQCRAHLPALTQEVA.

FMN contacts are provided by residues 68-69 (IK), asparagine 134, glutamate 143, 159-160 (RY), and serine 209.

It belongs to the NtaA/SnaA/DszA monooxygenase family. RutA subfamily.

The enzyme catalyses uracil + FMNH2 + NADH + O2 = (Z)-3-ureidoacrylate + FMN + NAD(+) + H2O + H(+). It catalyses the reaction thymine + FMNH2 + NADH + O2 = (Z)-2-methylureidoacrylate + FMN + NAD(+) + H2O + H(+). Catalyzes the pyrimidine ring opening between N-3 and C-4 by an unusual flavin hydroperoxide-catalyzed mechanism, adding oxygen atoms in the process to yield ureidoacrylate peracid, that immediately reacts with FMN forming ureidoacrylate and FMN-N(5)-oxide. The FMN-N(5)-oxide reacts spontaneously with NADH to produce FMN. Requires the flavin reductase RutF to regenerate FMN in vivo. This chain is Pyrimidine monooxygenase RutA, found in Escherichia coli (strain K12 / MC4100 / BW2952).